Consider the following 205-residue polypeptide: Proteasome subunit beta type-3 (205 aa).

Ser2 carries the N-acetylserine modification. Position 77 is an N6-acetyllysine (Lys77).

Belongs to the peptidase T1B family. In terms of assembly, the 26S proteasome consists of a 20S proteasome core and two 19S regulatory subunits. The 20S proteasome core is a barrel-shaped complex made of 28 subunits that are arranged in four stacked rings. The two outer rings are each formed by seven alpha subunits, and the two inner rings are formed by seven beta subunits. The proteolytic activity is exerted by three beta-subunits PSMB5, PSMB6 and PSMB7.

The protein localises to the cytoplasm. It localises to the nucleus. Non-catalytic component of the 20S core proteasome complex involved in the proteolytic degradation of most intracellular proteins. This complex plays numerous essential roles within the cell by associating with different regulatory particles. Associated with two 19S regulatory particles, forms the 26S proteasome and thus participates in the ATP-dependent degradation of ubiquitinated proteins. The 26S proteasome plays a key role in the maintenance of protein homeostasis by removing misfolded or damaged proteins that could impair cellular functions, and by removing proteins whose functions are no longer required. Associated with the PA200 or PA28, the 20S proteasome mediates ubiquitin-independent protein degradation. This type of proteolysis is required in several pathways including spermatogenesis (20S-PA200 complex) or generation of a subset of MHC class I-presented antigenic peptides (20S-PA28 complex). This Rattus norvegicus (Rat) protein is Proteasome subunit beta type-3 (Psmb3).